Consider the following 156-residue polypeptide: ATP synthase subunit b (156 aa).

Residues 7–27 (LIGQLIAFAIFVAFCMKFVWP) form a helical membrane-spanning segment.

The protein belongs to the ATPase B chain family. In terms of assembly, F-type ATPases have 2 components, F(1) - the catalytic core - and F(0) - the membrane proton channel. F(1) has five subunits: alpha(3), beta(3), gamma(1), delta(1), epsilon(1). F(0) has three main subunits: a(1), b(2) and c(10-14). The alpha and beta chains form an alternating ring which encloses part of the gamma chain. F(1) is attached to F(0) by a central stalk formed by the gamma and epsilon chains, while a peripheral stalk is formed by the delta and b chains.

The protein resides in the cell inner membrane. Functionally, f(1)F(0) ATP synthase produces ATP from ADP in the presence of a proton or sodium gradient. F-type ATPases consist of two structural domains, F(1) containing the extramembraneous catalytic core and F(0) containing the membrane proton channel, linked together by a central stalk and a peripheral stalk. During catalysis, ATP synthesis in the catalytic domain of F(1) is coupled via a rotary mechanism of the central stalk subunits to proton translocation. In terms of biological role, component of the F(0) channel, it forms part of the peripheral stalk, linking F(1) to F(0). The chain is ATP synthase subunit b from Pasteurella multocida (strain Pm70).